The chain runs to 216 residues: 2-hydroxy-3-keto-5-methylthiopentenyl-1-phosphate phosphatase (216 aa).

It belongs to the HAD-like hydrolase superfamily. MtnX family.

It catalyses the reaction 2-hydroxy-5-methylsulfanyl-3-oxopent-1-enyl phosphate + H2O = 1,2-dihydroxy-5-(methylsulfanyl)pent-1-en-3-one + phosphate. It participates in amino-acid biosynthesis; L-methionine biosynthesis via salvage pathway; L-methionine from S-methyl-5-thio-alpha-D-ribose 1-phosphate: step 4/6. In terms of biological role, dephosphorylates 2-hydroxy-3-keto-5-methylthiopentenyl-1-phosphate (HK-MTPenyl-1-P) yielding 1,2-dihydroxy-3-keto-5-methylthiopentene (DHK-MTPene). In Exiguobacterium sp. (strain ATCC BAA-1283 / AT1b), this protein is 2-hydroxy-3-keto-5-methylthiopentenyl-1-phosphate phosphatase.